The chain runs to 366 residues: Cell division protein FtsZ 1 (366 aa).

GTP-binding positions include Gly45–Asn49, Gly132–Gly134, Glu163, Arg167, and Asp210. Positions Pro344 to Glu354 are enriched in acidic residues. Residues Pro344–Leu366 form a disordered region. Positions Glu355–Leu366 are enriched in low complexity.

Belongs to the FtsZ family. In terms of assembly, homodimer. Polymerizes to form a dynamic ring structure in a strictly GTP-dependent manner. Interacts directly with several other division proteins.

The protein localises to the cytoplasm. Its function is as follows. Essential cell division protein that forms a contractile ring structure (Z ring) at the future cell division site. The regulation of the ring assembly controls the timing and the location of cell division. One of the functions of the FtsZ ring is to recruit other cell division proteins to the septum to produce a new cell wall between the dividing cells. Binds GTP and shows GTPase activity. The protein is Cell division protein FtsZ 1 of Pyrococcus woesei.